Reading from the N-terminus, the 70-residue chain is Kappa-scoloptoxin(07)-Ssm2b (70 aa).

Residues 1–19 (MLVFYALLFVSVFSSTVMG) form the signal peptide. The propeptide occupies 20 to 39 (ATIDKPILREAIEEIDVNKR).

This sequence belongs to the scoloptoxin-07 family. In terms of processing, contains 3 disulfide bonds. In terms of tissue distribution, expressed by the venom gland.

Its subcellular location is the secreted. Its function is as follows. Inhibits voltage-gated potassium channels. The sequence is that of Kappa-scoloptoxin(07)-Ssm2b from Scolopendra mutilans (Chinese red-headed centipede).